Reading from the N-terminus, the 171-residue chain is tRNA-specific adenosine deaminase (171 aa).

Positions 6–133 (EEQTYFMQEA…ERLNHRVQVE (128 aa)) constitute a CMP/dCMP-type deaminase domain. Histidine 57 is a Zn(2+) binding site. The active-site Proton donor is the glutamate 59. The Zn(2+) site is built by cysteine 87 and cysteine 90.

The protein belongs to the cytidine and deoxycytidylate deaminase family. As to quaternary structure, homodimer. Zn(2+) serves as cofactor.

It catalyses the reaction adenosine(34) in tRNA + H2O + H(+) = inosine(34) in tRNA + NH4(+). In terms of biological role, catalyzes the deamination of adenosine to inosine at the wobble position 34 of tRNA(Arg2). In Streptococcus pyogenes serotype M3 (strain ATCC BAA-595 / MGAS315), this protein is tRNA-specific adenosine deaminase.